The sequence spans 122 residues: Basic phospholipase A2 PLA-B (122 aa).

7 disulfide bridges follow: Cys26/Cys115, Cys28/Cys44, Cys43/Cys95, Cys49/Cys122, Cys50/Cys88, Cys57/Cys81, and Cys75/Cys86. Ca(2+)-binding residues include Tyr27, Gly29, and Gly31. The active site involves His47. A Ca(2+)-binding site is contributed by Asp48. Asp89 is an active-site residue.

The protein belongs to the phospholipase A2 family. Group II subfamily. D49 sub-subfamily. The cofactor is Ca(2+). In terms of tissue distribution, expressed by the venom gland.

It localises to the secreted. The enzyme catalyses a 1,2-diacyl-sn-glycero-3-phosphocholine + H2O = a 1-acyl-sn-glycero-3-phosphocholine + a fatty acid + H(+). Functionally, snake venom phospholipase A2 (PLA2) that displays edema-inducing activities. PLA-B is three times more active than PLA-A in edema-inducing activities. PLA2 catalyzes the calcium-dependent hydrolysis of the 2-acyl groups in 3-sn-phosphoglycerides. This Protobothrops flavoviridis (Habu) protein is Basic phospholipase A2 PLA-B.